The primary structure comprises 349 residues: MPMPPDESALSLLPDHPLAAHNTFGIDARARYAARITHPAQFEALHRDARVATLPHLVLGGGSNVVFTRDFDGLVLLDEIAGRRVVRDDDDAWYVEAGGGENWHAFVGWTLEHGMAGLENLALIPGTVGAAPIQNIGAYGLEMNAYFDSLVAVELATGRSERFDAARCAFGYRDSFFKRDGRGRFAIVSVTFRLPKRWTPRLGYADVTRELEARGISPDAATPRDVFDAVVAIRRAKLPDPRELGNAGSFFKNPVIDRAQFDALHARAPGIVSYPQPDGRVKLAAGWLIDRCGWKGRALGAAAVHDRQALVLVNRGGATGADVLALARAIQHDVRTQFGVELEPEPVCL.

The FAD-binding PCMH-type domain occupies 25–197 (GIDARARYAA…VSVTFRLPKR (173 aa)). Arg173 is an active-site residue. Catalysis depends on Ser249, which acts as the Proton donor. Residue Glu345 is part of the active site.

The protein belongs to the MurB family. Requires FAD as cofactor.

Its subcellular location is the cytoplasm. It carries out the reaction UDP-N-acetyl-alpha-D-muramate + NADP(+) = UDP-N-acetyl-3-O-(1-carboxyvinyl)-alpha-D-glucosamine + NADPH + H(+). It participates in cell wall biogenesis; peptidoglycan biosynthesis. In terms of biological role, cell wall formation. The chain is UDP-N-acetylenolpyruvoylglucosamine reductase from Burkholderia multivorans (strain ATCC 17616 / 249).